Here is a 554-residue protein sequence, read N- to C-terminus: Carboxypeptidase Y homolog A (554 aa).

The signal sequence occupies residues 1 to 17 (MRISASTVLLGAASAAS). Positions 18-137 (AASFQNQAQH…QLDNFNLRVK (120 aa)) are excised as a propeptide. Intrachain disulfides connect Cys191/Cys431, Cys325/Cys339, Cys349/Cys372, Cys356/Cys365, and Cys394/Cys401. Asn222 is a glycosylation site (N-linked (GlcNAc...) asparagine). Ser278 is a catalytic residue. Residue Asp470 is part of the active site. Asn518 is a glycosylation site (N-linked (GlcNAc...) asparagine). His529 is a catalytic residue.

The protein belongs to the peptidase S10 family.

It localises to the vacuole. It catalyses the reaction Release of a C-terminal amino acid with broad specificity.. In terms of biological role, vacuolar carboxypeptidase involved in degradation of small peptides. Digests preferentially peptides containing an aliphatic or hydrophobic residue in P1' position, as well as methionine, leucine or phenylalanine in P1 position of ester substrate. In Neurospora crassa (strain ATCC 24698 / 74-OR23-1A / CBS 708.71 / DSM 1257 / FGSC 987), this protein is Carboxypeptidase Y homolog A (cpyA).